A 305-amino-acid chain; its full sequence is Deoxyhypusine hydroxylase (305 aa).

2 HEAT-like PBS-type repeats span residues 54–80 (LKHE…VLKD) and 87–113 (VRHE…YAED). Fe cation is bound by residues histidine 56, histidine 89, and glutamate 90. The disordered stretch occupies residues 137-160 (EQTKDGTDENPYCSVDPAPPAQRK). HEAT-like PBS-type repeat units follow at residues 178–204 (DRYR…GLQC), 209–235 (FRHE…ALEK), and 242–268 (VRHE…YRKD). Fe cation is bound by residues histidine 211, histidine 244, and glutamate 245.

This sequence belongs to the deoxyhypusine hydroxylase family. Fe(2+) is required as a cofactor.

The catalysed reaction is [eIF5A protein]-deoxyhypusine + AH2 + O2 = [eIF5A protein]-hypusine + A + H2O. It participates in protein modification; eIF5A hypusination. Functionally, catalyzes the hydroxylation of the N(6)-(4-aminobutyl)-L-lysine intermediate produced by deoxyhypusine synthase/DHPS on a critical lysine of the eukaryotic translation initiation factor 5A/eIF-5A. This is the second step of the post-translational modification of that lysine into an unusual amino acid residue named hypusine. Hypusination is unique to mature eIF-5A factor and is essential for its function. This Danio rerio (Zebrafish) protein is Deoxyhypusine hydroxylase (dohh).